The sequence spans 531 residues: Probable cytochrome P450 4e1 (531 aa).

Heme contacts are provided by glutamate 307 and cysteine 444.

Belongs to the cytochrome P450 family. Heme serves as cofactor.

It localises to the endoplasmic reticulum membrane. The protein localises to the microsome membrane. Its function is as follows. May be involved in the metabolism of insect hormones and in the breakdown of synthetic insecticides. This chain is Probable cytochrome P450 4e1 (Cyp4e1), found in Drosophila melanogaster (Fruit fly).